The chain runs to 60 residues: Large ribosomal subunit protein uL30 (60 aa).

The protein belongs to the universal ribosomal protein uL30 family. Part of the 50S ribosomal subunit.

The sequence is that of Large ribosomal subunit protein uL30 from Amoebophilus asiaticus (strain 5a2).